The sequence spans 328 residues: Cytochrome c biogenesis protein CcsA (328 aa).

A run of 8 helical transmembrane segments spans residues 13 to 33 (ISFS…LVNL), 46 to 66 (GIII…IFSG), 73 to 93 (LYES…VSYF), 101 to 121 (LNAI…SGLL), 146 to 166 (MILG…LLVI), 234 to 254 (IISL…VWAN), 263 to 283 (WDPK…YLHI), and 295 to 315 (AIVA…VNLL).

The protein belongs to the CcmF/CycK/Ccl1/NrfE/CcsA family. May interact with Ccs1.

Its subcellular location is the plastid. The protein resides in the chloroplast thylakoid membrane. In terms of biological role, required during biogenesis of c-type cytochromes (cytochrome c6 and cytochrome f) at the step of heme attachment. The sequence is that of Cytochrome c biogenesis protein CcsA from Olimarabidopsis pumila (Dwarf rocket).